The following is a 210-amino-acid chain: Insulin receptor (210 aa).

The 96-residue stretch at 1–96 (VSNSSSQIIL…SQILKELEES (96 aa)) folds into the Fibronectin type-III domain. 3 N-linked (GlcNAc...) asparagine glycosylation sites follow: asparagine 3, asparagine 21, and asparagine 68. The segment at 55–78 (WSPPFESEDSQKHNQSEYEDSAGE) is disordered. The insulin-binding stretch occupies residues 103 to 111 (EDYLHNVVF). Residues 116 to 169 (TSSGTGAEDPRPSRKRRSLGDVGNVTVAVPTVAAFPNTSSTSTPTSPEEHRPFE) form a disordered region. Topologically, residues 133–210 (SLGDVGNVTV…EERCSVAAYV (78 aa)) are extracellular. Over residues 137–161 (VGNVTVAVPTVAAFPNTSSTSTPTS) the composition is skewed to low complexity. 2 N-linked (GlcNAc...) asparagine glycosylation sites follow: asparagine 139 and asparagine 152. Cysteines 195 and 204 form a disulfide.

Belongs to the protein kinase superfamily. Tyr protein kinase family. Insulin receptor subfamily. Tetramer of 2 alpha and 2 beta chains linked by disulfide bonds. The alpha chains carry the insulin-binding regions, while the beta chains carry the kinase domain. Forms a hybrid receptor with IGF1R, the hybrid is a tetramer consisting of 1 alpha chain and 1 beta chain of INSR and 1 alpha chain and 1 beta chain of IGF1R. Interacts with SORBS1 but dissociates from it following insulin stimulation. Binds SH2B2. Activated form of INSR interacts (via phosphorylated Tyrosine) with the PTB/PID domains of IRS1 and SHC1. The sequences surrounding the phosphorylated NPXY motif contribute differentially to either IRS1 or SHC1 recognition. Interacts (via tyrosines in the C-terminus) with IRS2 (via PTB domain and 591-786 AA); the 591-786 would be the primary anchor of IRS2 to INSR while the PTB domain would have a stabilizing action on the interaction with INSR. Interacts with the SH2 domains of the 85 kDa regulatory subunit of PI3K (PIK3R1) in vitro, when autophosphorylated on tyrosine residues. Interacts with SOCS7. Interacts with SOCS3. Interacts with SOCS1. Interacts with CAV2 (tyrosine-phosphorylated form); the interaction is increased with 'Tyr-27'phosphorylation of CAV2. Interacts with ARRB2. Interacts with GRB10; this interaction blocks the association between IRS1/IRS2 and INSR, significantly reduces insulin-stimulated tyrosine phosphorylation of IRS1 and IRS2 and thus decreases insulin signaling. Interacts with GRB7. Interacts with PDPK1. Interacts with GRB14 (via BPS domain). Interacts (via subunit alpha) with ENPP1 (via 485-599 AA); this interaction blocks autophosphorylation. Interacts with PTPRE. Interacts with STAT5B (via SH2 domain). Interacts with PTPRF. Interacts with ATIC; ATIC together with PRKAA2/AMPK2 and HACD3/PTPLAD1 is proposed to be part of a signaling netwok regulating INSR autophosphorylation and endocytosis. Interacts with the insulin receptor SORL1; this interaction strongly increases its surface exposure, hence strengthens insulin signal reception. Interacts (tyrosine phosphorylated) with CCDC88A/GIV (via SH2-like region); binding requires autophosphorylation of the INSR C-terminal region. Interacts with GNAI3; the interaction is probably mediated by CCDC88A/GIV. Interacts with LMBRD1. Interacts (in response to insulin stimulation) with NCK1; this interaction may recruit PTPN1 to mediate INSR dephosphorylation. Post-translationally, after being transported from the endoplasmic reticulum to the Golgi apparatus, the single glycosylated precursor is further glycosylated and then cleaved, followed by its transport to the plasma membrane. In terms of processing, autophosphorylated on tyrosine residues in response to insulin. Dephosphorylated by PTPN1, PTPRE and PTPRF. Dephosphorylated by PTPN2; down-regulates insulin-induced signaling. S-nitrosylation by BLVRB inhibits the receptor tyrosine kinase, thereby inhibiting insulin signaling.

Its subcellular location is the cell membrane. The protein localises to the late endosome. It is found in the lysosome. It catalyses the reaction L-tyrosyl-[protein] + ATP = O-phospho-L-tyrosyl-[protein] + ADP + H(+). Activated in response to insulin. Autophosphorylation activates the kinase activity. PTPN1, PTPRE and PTPRF dephosphorylate important tyrosine residues, thereby reducing INSR activity. Inhibited by ENPP1. GRB10 and GRB14 inhibit the catalytic activity of the INSR, they block access of substrates to the activated receptor. SOCS1 and SOCS3 act as negative regulators of INSR activity, they bind to the activated INRS and interfere with the phosphorylation of INSR substrates. Receptor tyrosine kinase which mediates the pleiotropic actions of insulin. Binding of insulin leads to phosphorylation of several intracellular substrates, including, insulin receptor substrates (IRS1, 2, 3, 4), SHC, GAB1, CBL and other signaling intermediates. Each of these phosphorylated proteins serve as docking proteins for other signaling proteins that contain Src-homology-2 domains (SH2 domain) that specifically recognize different phosphotyrosine residues, including the p85 regulatory subunit of PI3K and SHP2. Phosphorylation of IRSs proteins lead to the activation of two main signaling pathways: the PI3K-AKT/PKB pathway, which is responsible for most of the metabolic actions of insulin, and the Ras-MAPK pathway, which regulates expression of some genes and cooperates with the PI3K pathway to control cell growth and differentiation. Binding of the SH2 domains of PI3K to phosphotyrosines on IRS1 leads to the activation of PI3K and the generation of phosphatidylinositol-(3, 4, 5)-triphosphate (PIP3), a lipid second messenger, which activates several PIP3-dependent serine/threonine kinases, such as PDPK1 and subsequently AKT/PKB. The net effect of this pathway is to produce a translocation of the glucose transporter SLC2A4/GLUT4 from cytoplasmic vesicles to the cell membrane to facilitate glucose transport. Moreover, upon insulin stimulation, activated AKT/PKB is responsible for: anti-apoptotic effect of insulin by inducing phosphorylation of BAD; regulates the expression of gluconeogenic and lipogenic enzymes by controlling the activity of the winged helix or forkhead (FOX) class of transcription factors. Another pathway regulated by PI3K-AKT/PKB activation is mTORC1 signaling pathway which regulates cell growth and metabolism and integrates signals from insulin. AKT mediates insulin-stimulated protein synthesis by phosphorylating TSC2 thereby activating mTORC1 pathway. The Ras/RAF/MAP2K/MAPK pathway is mainly involved in mediating cell growth, survival and cellular differentiation of insulin. Phosphorylated IRS1 recruits GRB2/SOS complex, which triggers the activation of the Ras/RAF/MAP2K/MAPK pathway. In addition to binding insulin, the insulin receptor can bind insulin-like growth factors (IGFI and IGFII). When present in a hybrid receptor with IGF1R, binds IGF1. In adipocytes, inhibits lipolysis. This is Insulin receptor (INSR) from Macaca mulatta (Rhesus macaque).